The primary structure comprises 30 residues: Peptidase 1 (30 aa).

The protein belongs to the peptidase C1 family.

It localises to the secreted. The enzyme catalyses Broad endopeptidase specificity.. Its function is as follows. Thiol protease that hydrolyzes proteins, with a preference for Phe or basic residues. The chain is Peptidase 1 (DERM1) from Dermatophagoides microceras (House dust mite).